The primary structure comprises 111 residues: UPF0060 membrane protein XAC3064 (111 aa).

The next 4 membrane-spanning stretches (helical) occupy residues 8-28 (LLLFAATALAELVGCYLPYLW), 32-52 (GGSVWLLLPTALSLAVFVWLL), 64-84 (AAYGGVYIASALLWLWWVDGV), and 91-111 (LLGAACCLLGMAVIMFSPRSA).

Belongs to the UPF0060 family.

It localises to the cell inner membrane. This Xanthomonas axonopodis pv. citri (strain 306) protein is UPF0060 membrane protein XAC3064.